The chain runs to 307 residues: Small ribosomal subunit biogenesis GTPase RsgA (307 aa).

Residues K80–F237 form the CP-type G domain. GTP-binding positions include N129–D132 and G180–S188. Residues C261, C266, H268, and C274 each contribute to the Zn(2+) site.

It belongs to the TRAFAC class YlqF/YawG GTPase family. RsgA subfamily. As to quaternary structure, monomer. Associates with 30S ribosomal subunit, binds 16S rRNA. Zn(2+) serves as cofactor.

The protein localises to the cytoplasm. Functionally, one of several proteins that assist in the late maturation steps of the functional core of the 30S ribosomal subunit. Helps release RbfA from mature subunits. May play a role in the assembly of ribosomal proteins into the subunit. Circularly permuted GTPase that catalyzes slow GTP hydrolysis, GTPase activity is stimulated by the 30S ribosomal subunit. In Borreliella burgdorferi (strain ATCC 35210 / DSM 4680 / CIP 102532 / B31) (Borrelia burgdorferi), this protein is Small ribosomal subunit biogenesis GTPase RsgA.